A 330-amino-acid chain; its full sequence is MALPEFTMRQLLEAGVHFGHQSHRWNPKMADYIFGARNNIHIIDLAQTVPLLHTALQAVSDTVAKGGRILFVGTKRQAQDNVADAAKRCAQYFVNSRWLGGTLTNWKTISASIKRLRHLDEVLSSGEANSYTKKERLTLQRERDKLDRSLGGIKDMGGLPDMIFVIDTNKEDIAIQEAQRLNIPVAAIVDTNCDPKGITYVVPGNDDAGRAISLYCDLIARAAIDGISRAQGELGIDIGASAAPLEEELPAATAASTFQGLPGPRGTADDLKKLTGVSGAIEKKLNDLGIFHFWQLAELDHDTAHQIGEEVGLPSRADAWVAQAKSLADA.

The protein belongs to the universal ribosomal protein uS2 family.

This is Small ribosomal subunit protein uS2 from Bradyrhizobium sp. (strain BTAi1 / ATCC BAA-1182).